The sequence spans 214 residues: Holliday junction branch migration complex subunit RuvA (214 aa).

Residues 1–67 form a domain I region; sequence MVGWLKGLIV…ADNWQFFGFK (67 aa). The segment at 68–146 is domain II; it reads STQERDIFRE…AFAGMDPAPS (79 aa). Residues 147–154 form a flexible linker region; it reads LAEGVSSE. The segment at 155–214 is domain III; it reads QMPESGADVEATLSMLGYDDLEVRRAIRAIAEGSDGPPPPGDDQDAWLRGCLQWLSRDSA.

The protein belongs to the RuvA family. As to quaternary structure, homotetramer. Forms an RuvA(8)-RuvB(12)-Holliday junction (HJ) complex. HJ DNA is sandwiched between 2 RuvA tetramers; dsDNA enters through RuvA and exits via RuvB. An RuvB hexamer assembles on each DNA strand where it exits the tetramer. Each RuvB hexamer is contacted by two RuvA subunits (via domain III) on 2 adjacent RuvB subunits; this complex drives branch migration. In the full resolvosome a probable DNA-RuvA(4)-RuvB(12)-RuvC(2) complex forms which resolves the HJ.

The protein resides in the cytoplasm. Its function is as follows. The RuvA-RuvB-RuvC complex processes Holliday junction (HJ) DNA during genetic recombination and DNA repair, while the RuvA-RuvB complex plays an important role in the rescue of blocked DNA replication forks via replication fork reversal (RFR). RuvA specifically binds to HJ cruciform DNA, conferring on it an open structure. The RuvB hexamer acts as an ATP-dependent pump, pulling dsDNA into and through the RuvAB complex. HJ branch migration allows RuvC to scan DNA until it finds its consensus sequence, where it cleaves and resolves the cruciform DNA. This Synechococcus sp. (strain CC9605) protein is Holliday junction branch migration complex subunit RuvA.